The chain runs to 372 residues: 3-dehydroquinate synthase (372 aa).

NAD(+) contacts are provided by residues 116-120 (GVVGD), 140-141 (TT), K153, K162, and 180-183 (TLNT). Residues E195, H260, and H277 each contribute to the Zn(2+) site.

Belongs to the sugar phosphate cyclases superfamily. Dehydroquinate synthase family. Requires Co(2+) as cofactor. Zn(2+) serves as cofactor. NAD(+) is required as a cofactor.

The protein localises to the cytoplasm. The enzyme catalyses 7-phospho-2-dehydro-3-deoxy-D-arabino-heptonate = 3-dehydroquinate + phosphate. It participates in metabolic intermediate biosynthesis; chorismate biosynthesis; chorismate from D-erythrose 4-phosphate and phosphoenolpyruvate: step 2/7. Its function is as follows. Catalyzes the conversion of 3-deoxy-D-arabino-heptulosonate 7-phosphate (DAHP) to dehydroquinate (DHQ). The protein is 3-dehydroquinate synthase of Prochlorococcus marinus (strain MIT 9303).